Consider the following 96-residue polypeptide: NADH-ubiquinone oxidoreductase chain 4L (96 aa).

3 helical membrane passes run 1–21 (MELM…ALSL), 27–47 (MLAL…LVMF), and 61–81 (IILL…VVAI).

The protein belongs to the complex I subunit 4L family.

It is found in the mitochondrion membrane. It catalyses the reaction a ubiquinone + NADH + 5 H(+)(in) = a ubiquinol + NAD(+) + 4 H(+)(out). Its function is as follows. Core subunit of the mitochondrial membrane respiratory chain NADH dehydrogenase (Complex I) which catalyzes electron transfer from NADH through the respiratory chain, using ubiquinone as an electron acceptor. Part of the enzyme membrane arm which is embedded in the lipid bilayer and involved in proton translocation. The sequence is that of NADH-ubiquinone oxidoreductase chain 4L (MT-ND4L) from Lycodon semicarinatus (Ryukyu odd-tooth snake).